We begin with the raw amino-acid sequence, 519 residues long: Histidine ammonia-lyase (519 aa).

Positions 146–148 (ASG) form a cross-link, 5-imidazolinone (Ala-Gly). At Ser147 the chain carries 2,3-didehydroalanine (Ser).

This sequence belongs to the PAL/histidase family. Post-translationally, contains an active site 4-methylidene-imidazol-5-one (MIO), which is formed autocatalytically by cyclization and dehydration of residues Ala-Ser-Gly.

The protein localises to the cytoplasm. It catalyses the reaction L-histidine = trans-urocanate + NH4(+). It functions in the pathway amino-acid degradation; L-histidine degradation into L-glutamate; N-formimidoyl-L-glutamate from L-histidine: step 1/3. This chain is Histidine ammonia-lyase, found in Bradyrhizobium diazoefficiens (strain JCM 10833 / BCRC 13528 / IAM 13628 / NBRC 14792 / USDA 110).